Consider the following 300-residue polypeptide: 4-hydroxy-tetrahydrodipicolinate synthase (300 aa).

Thr-45 lines the pyruvate pocket. Tyr-140 (proton donor/acceptor) is an active-site residue. Lys-169 functions as the Schiff-base intermediate with substrate in the catalytic mechanism. Ile-210 is a pyruvate binding site.

This sequence belongs to the DapA family. In terms of assembly, homotetramer; dimer of dimers.

It localises to the cytoplasm. It carries out the reaction L-aspartate 4-semialdehyde + pyruvate = (2S,4S)-4-hydroxy-2,3,4,5-tetrahydrodipicolinate + H2O + H(+). It functions in the pathway amino-acid biosynthesis; L-lysine biosynthesis via DAP pathway; (S)-tetrahydrodipicolinate from L-aspartate: step 3/4. In terms of biological role, catalyzes the condensation of (S)-aspartate-beta-semialdehyde [(S)-ASA] and pyruvate to 4-hydroxy-tetrahydrodipicolinate (HTPA). This chain is 4-hydroxy-tetrahydrodipicolinate synthase, found in Helicobacter pylori (strain G27).